The following is a 290-amino-acid chain: 4-hydroxybenzoate octaprenyltransferase (290 aa).

8 helical membrane-spanning segments follow: residues 21 to 41 (IGTMLLLWPCLMALLLAADGM), 44 to 64 (LRVLIIFIIGVVVMRACGCII), 97 to 117 (LFVVLGLFAFSLVLLLNPLVV), 143 to 163 (FLGVVWSWSIPMAYAAQTGEV), 168 to 188 (WWLFAANWCWTVAYDTMYAMV), 211 to 231 (EIIGAFQLAALGCFIAAGWSG), 235 to 255 (LLYGLGVLTFVGFSAYQQRLI), and 270 to 290 (NNWAGLSLFLALGADYAFAAL).

It belongs to the UbiA prenyltransferase family. It depends on Mg(2+) as a cofactor.

The protein resides in the cell inner membrane. It carries out the reaction all-trans-octaprenyl diphosphate + 4-hydroxybenzoate = 4-hydroxy-3-(all-trans-octaprenyl)benzoate + diphosphate. The protein operates within cofactor biosynthesis; ubiquinone biosynthesis. Catalyzes the prenylation of para-hydroxybenzoate (PHB) with an all-trans polyprenyl group. Mediates the second step in the final reaction sequence of ubiquinone-8 (UQ-8) biosynthesis, which is the condensation of the polyisoprenoid side chain with PHB, generating the first membrane-bound Q intermediate 3-octaprenyl-4-hydroxybenzoate. The chain is 4-hydroxybenzoate octaprenyltransferase from Shewanella amazonensis (strain ATCC BAA-1098 / SB2B).